We begin with the raw amino-acid sequence, 939 residues long: MSRDSDPMKWYHGNLSREAADELLKQGYEDGTFLVRESSTAAGDFVLSLLCQGEVCHYQVRRHGGEDAFFSIDDKVQTKILHGLDTLVDYYQQAANGLPTKLTVPLIRDLPPHNTRSHGVTNLLHRATSKNESKVVFELLKCGYRNFDAKNQDGQTALHLAALHSDEDILKHLLNAKVQVNSSDSFGCQPLHYAARSKPASFIRTLISAQANVQGRNIDNGYVPLHEAAKHGNLEAVQELLLAEAPPLPRTSSGEFPFDLAKEAGQTAVEEFLLNYKLPPANTTRDQWYHGTLTREEAVAILKKHAKELLAKQPEVDTSGCFLVRYSESPAASGLVLTLLCDQVVKNFRISQADLYQNGNKVQSGGSKFLYIDDGPYWPSVEHLIAHFMRFSYGLPVSLKYPVPPQPKPEVPSFATIPRSNMKPKAASPATPPTPVSPHSHHQHPHVPALTITKKKQKENSSSMFNTLRLTSPKKALFDMNSLRKNKSKGKRSDSESSVSGSLAGTEQELQAAAPMLKSLSFSTEFSTFNADGVTGSGAAAAGEVYNVPRNNTPIEIDLPPIAQKTEAEVEYFTKSDVAIERERAGQWIGNGYQPTMDVLSLLDQQIKAPAVARLNSLGPNASTESEMASYLHRKCSGTPSTPSATEVEAAKLRFFIEPEKLVLDREIGHGEFGSVHSGWLLRKSGAGEESRLEVAIKMLSDEHSNKQEFLREASVMMRLEHKCIVRLIGIAKGEMLMMVQELAPLGSMLQYILDHGHEITANAELKVWASQIACGMHYLESQHFVHRDLAARNILLTARHQAKISDFGMSRSLRPGSTEYQFTQGGRWPIRWYAPESFNLGIFSHASDVWSFGVTIWEMFSLGAPPYGEISNVDAIKLVDSGERLPQPNLCPAYIYAVMQSCWKERPKDRPTFVYLTEFFARDPDYQNLPELVQTVHI.

Residues 10–106 (WYHGNLSREA…GLPTKLTVPL (97 aa)) form the SH2 1 domain. 3 ANK repeats span residues 153–185 (DGQT…SSDS), 186–218 (FGCQ…GRNI), and 220–252 (NGYV…PRTS). The SH2 2 domain occupies 288–403 (WYHGTLTREE…GLPVSLKYPV (116 aa)). Disordered stretches follow at residues 410 to 446 (EVPS…QHPH) and 476 to 505 (ALFD…SLAG). Positions 496-505 (ESSVSGSLAG) are enriched in polar residues. One can recognise a Protein kinase domain in the interval 662 to 921 (LVLDREIGHG…PTFVYLTEFF (260 aa)). ATP is bound by residues 668 to 676 (IGHGEFGSV) and Lys-698. The active-site Proton acceptor is Asp-789. A Phosphotyrosine modification is found at Tyr-927.

This sequence belongs to the protein kinase superfamily. Tyr protein kinase family. As to quaternary structure, interacts with drpr; this is required for the recruitment of drpr and glial cells to severed axons and for the phagocytosis of axonal debris by glial cells following axon injury. As to expression, gastrulation embryos show expression in ectodermal cells along the cephalic furrow and ventral midline. Proctodeum, stomodeum and their derived structures (foregut, atrium, pharynx, esophagus and hindgut) continue to show expression from stage 8-9 to late embryos. Other ectodermally derived structures (frontal sac, salivary gland and labium) and developing tracheal system also show expression.

The protein localises to the cytoplasm. The enzyme catalyses L-tyrosyl-[protein] + ATP = O-phospho-L-tyrosyl-[protein] + ADP + H(+). Its function is as follows. Following axon injury, required for recruitment of drpr and glial cells to severed axons and for glial clearance of severed axons from the central nervous system. Together with Src42a and drpr, promotes the migration of macrophages to sites of wounding as part of a signaling cascade where Scr42a detects production of hydrogen peroxide at wound sites which triggers phosphorylation of drpr and subsequent recruitment and activation of shark. May be involved in signal transduction on the apical surface of ectodermal epithelial cells, regulating their polarity during invagination. Crumbs (crb) may be the intracellular signal. This Drosophila melanogaster (Fruit fly) protein is Tyrosine-protein kinase Shark.